We begin with the raw amino-acid sequence, 209 residues long: Small ribosomal subunit protein uS4 (209 aa).

Over residues 1–13 (MSTKSRTRSKTRL) the composition is skewed to basic residues. Disordered stretches follow at residues 1–20 (MSTK…LGIP) and 28–49 (YLEK…QDSD). The region spanning 95 to 160 (QRLDALVVRS…TEPFQVAAAG (66 aa)) is the S4 RNA-binding domain.

The protein belongs to the universal ribosomal protein uS4 family. In terms of assembly, part of the 30S ribosomal subunit. Contacts protein S5. The interaction surface between S4 and S5 is involved in control of translational fidelity.

Its function is as follows. One of the primary rRNA binding proteins, it binds directly to 16S rRNA where it nucleates assembly of the body of the 30S subunit. With S5 and S12 plays an important role in translational accuracy. The sequence is that of Small ribosomal subunit protein uS4 from Clavibacter sepedonicus (Clavibacter michiganensis subsp. sepedonicus).